A 671-amino-acid chain; its full sequence is Probable potassium transport system protein Kup (671 aa).

The tract at residues 1–43 (MSQIPSPNDPASTGAAPSSAAVPAGPSATPAPSPTAGFSLPGH) is disordered. A compositionally biased stretch (low complexity) spans 10-37 (PASTGAAPSSAAVPAGPSATPAPSPTAG). 12 helical membrane-spanning segments follow: residues 52-72 (LAAL…TSPL), 92-112 (VLGV…FKYM), 147-167 (LMLG…TPAI), 181-201 (PAME…LFLF), 209-229 (VGAV…VLGV), 255-275 (GWHG…GEAL), 291-311 (WLGL…ALLL), 323-343 (LLAP…AAIV), 381-401 (IYLP…VLGF), 407-427 (LASA…LLFH), 441-461 (AWPL…ANVV), and 465-485 (DGGW…STWK).

Belongs to the HAK/KUP transporter (TC 2.A.72) family.

It localises to the cell inner membrane. It carries out the reaction K(+)(in) + H(+)(in) = K(+)(out) + H(+)(out). Transport of potassium into the cell. Likely operates as a K(+):H(+) symporter. The polypeptide is Probable potassium transport system protein Kup (Anaeromyxobacter sp. (strain K)).